We begin with the raw amino-acid sequence, 707 residues long: U-box domain-containing protein 2 (707 aa).

A U-box domain is found at 239–313 (RVPSDFRCSL…ASWCETNNVY (75 aa)). ARM repeat units follow at residues 453-492 (TDNRIVIARCEAIPSLVSLLYSTDERIQADAVTCLLNLSI), 494-534 (DNNK…SLSV), 536-575 (EEYKTEIGEAGAIEPLVDLLGSGSLSGKKDAATALFNLSI), 577-615 (HENKTKVIEAGAVRYLVELMDPAFGMVEKAVVVLANLAT), and 617-656 (REGKIAIGEEGGIPVLVEVVELGSARGKENATAALLQLCT).

The catalysed reaction is S-ubiquitinyl-[E2 ubiquitin-conjugating enzyme]-L-cysteine + [acceptor protein]-L-lysine = [E2 ubiquitin-conjugating enzyme]-L-cysteine + N(6)-ubiquitinyl-[acceptor protein]-L-lysine.. Its pathway is protein modification; protein ubiquitination. Its function is as follows. Functions as an E3 ubiquitin ligase. The chain is U-box domain-containing protein 2 (PUB2) from Arabidopsis thaliana (Mouse-ear cress).